The primary structure comprises 102 residues: Small ribosomal subunit protein uS10 (102 aa).

Belongs to the universal ribosomal protein uS10 family. In terms of assembly, part of the 30S ribosomal subunit.

Its function is as follows. Involved in the binding of tRNA to the ribosomes. In Syntrophus aciditrophicus (strain SB), this protein is Small ribosomal subunit protein uS10.